Consider the following 164-residue polypeptide: UPF0303 protein RHECIAT_CH0003058 (164 aa).

Belongs to the UPF0303 family.

The polypeptide is UPF0303 protein RHECIAT_CH0003058 (Rhizobium etli (strain CIAT 652)).